The following is a 134-amino-acid chain: NAD(P)H-quinone oxidoreductase subunit 3 (134 aa).

The next 3 membrane-spanning stretches (helical) occupy residues 20-40 (GYDA…LALV), 78-98 (MFAL…PWAV), and 103-123 (LGLL…VALA).

The protein belongs to the complex I subunit 3 family. NDH-1 can be composed of about 15 different subunits; different subcomplexes with different compositions have been identified which probably have different functions.

The protein resides in the cellular thylakoid membrane. It catalyses the reaction a plastoquinone + NADH + (n+1) H(+)(in) = a plastoquinol + NAD(+) + n H(+)(out). The enzyme catalyses a plastoquinone + NADPH + (n+1) H(+)(in) = a plastoquinol + NADP(+) + n H(+)(out). Functionally, NDH-1 shuttles electrons from an unknown electron donor, via FMN and iron-sulfur (Fe-S) centers, to quinones in the respiratory and/or the photosynthetic chain. The immediate electron acceptor for the enzyme in this species is believed to be plastoquinone. Couples the redox reaction to proton translocation, and thus conserves the redox energy in a proton gradient. Cyanobacterial NDH-1 also plays a role in inorganic carbon-concentration. The protein is NAD(P)H-quinone oxidoreductase subunit 3 of Prochlorococcus marinus (strain MIT 9303).